A 486-amino-acid chain; its full sequence is Protein nucleotidyltransferase YdiU (486 aa).

Residues glycine 90, glycine 92, arginine 93, lysine 113, aspartate 125, glycine 126, arginine 176, and arginine 183 each contribute to the ATP site. The active-site Proton acceptor is aspartate 252. Mg(2+) is bound by residues asparagine 253 and aspartate 262. Aspartate 262 is an ATP binding site.

This sequence belongs to the SELO family. It depends on Mg(2+) as a cofactor. Mn(2+) is required as a cofactor.

It carries out the reaction L-seryl-[protein] + ATP = 3-O-(5'-adenylyl)-L-seryl-[protein] + diphosphate. It catalyses the reaction L-threonyl-[protein] + ATP = 3-O-(5'-adenylyl)-L-threonyl-[protein] + diphosphate. The enzyme catalyses L-tyrosyl-[protein] + ATP = O-(5'-adenylyl)-L-tyrosyl-[protein] + diphosphate. The catalysed reaction is L-histidyl-[protein] + UTP = N(tele)-(5'-uridylyl)-L-histidyl-[protein] + diphosphate. It carries out the reaction L-seryl-[protein] + UTP = O-(5'-uridylyl)-L-seryl-[protein] + diphosphate. It catalyses the reaction L-tyrosyl-[protein] + UTP = O-(5'-uridylyl)-L-tyrosyl-[protein] + diphosphate. Nucleotidyltransferase involved in the post-translational modification of proteins. It can catalyze the addition of adenosine monophosphate (AMP) or uridine monophosphate (UMP) to a protein, resulting in modifications known as AMPylation and UMPylation. The protein is Protein nucleotidyltransferase YdiU of Pseudomonas aeruginosa (strain ATCC 15692 / DSM 22644 / CIP 104116 / JCM 14847 / LMG 12228 / 1C / PRS 101 / PAO1).